The primary structure comprises 51 residues: Large ribosomal subunit protein eL39 (51 aa).

The interval 1-22 is disordered; it reads MPSQKSFRTKQKLAKAQKQNRP.

It belongs to the eukaryotic ribosomal protein eL39 family. In terms of assembly, interacts with YIH1.

The polypeptide is Large ribosomal subunit protein eL39 (RPL39) (Debaryomyces hansenii (strain ATCC 36239 / CBS 767 / BCRC 21394 / JCM 1990 / NBRC 0083 / IGC 2968) (Yeast)).